The following is a 125-amino-acid chain: Fluoride-specific ion channel FluC (125 aa).

The next 2 helical transmembrane spans lie at 4–24 and 34–54; these read LWVALGGALGALARYTVGVWI and YGTFAINVTGCFLIGLALTVL. Na(+) contacts are provided by Gly74 and Thr77. The chain crosses the membrane as a helical span at residues 99–119; the sequence is VLYFGSSLALGILAVWLGMVV.

This sequence belongs to the fluoride channel Fluc/FEX (TC 1.A.43) family.

It localises to the cell inner membrane. It carries out the reaction fluoride(in) = fluoride(out). Its activity is regulated as follows. Na(+) is not transported, but it plays an essential structural role and its presence is essential for fluoride channel function. Fluoride-specific ion channel. Important for reducing fluoride concentration in the cell, thus reducing its toxicity. The chain is Fluoride-specific ion channel FluC from Acidobacterium capsulatum (strain ATCC 51196 / DSM 11244 / BCRC 80197 / JCM 7670 / NBRC 15755 / NCIMB 13165 / 161).